Consider the following 847-residue polypeptide: Pep5-like zinc finger protein C16A10.03c (847 aa).

The stretch at 387–526 (YIEAIPFSDS…GIWLFNSDPM (140 aa)) is one CHCR repeat. The segment at 780-814 (CDNCEGLLDVPFVSYSCLHLVHRDCATETVCPKCK) adopts an RING-type; atypical zinc-finger fold.

The protein resides in the cytoplasm. Its subcellular location is the nucleus. The sequence is that of Pep5-like zinc finger protein C16A10.03c from Schizosaccharomyces pombe (strain 972 / ATCC 24843) (Fission yeast).